A 724-amino-acid chain; its full sequence is Catalase-peroxidase (724 aa).

The segment at residues 98–226 (WHSAGTYRIA…LAAVMMGLIY (129 aa)) is a cross-link (tryptophyl-tyrosyl-methioninium (Trp-Tyr) (with M-252)). The Proton acceptor role is filled by His-99. The segment at residues 226–252 (YVNPEGVDGNPDPLKTAQDMRVTFARM) is a cross-link (tryptophyl-tyrosyl-methioninium (Tyr-Met) (with W-98)). His-267 serves as a coordination point for heme b.

It belongs to the peroxidase family. Peroxidase/catalase subfamily. Homodimer or homotetramer. Heme b serves as cofactor. Post-translationally, formation of the three residue Trp-Tyr-Met cross-link is important for the catalase, but not the peroxidase activity of the enzyme.

The enzyme catalyses H2O2 + AH2 = A + 2 H2O. It catalyses the reaction 2 H2O2 = O2 + 2 H2O. Functionally, bifunctional enzyme with both catalase and broad-spectrum peroxidase activity. This Vibrio cholerae serotype O1 (strain ATCC 39315 / El Tor Inaba N16961) protein is Catalase-peroxidase.